The chain runs to 191 residues: Putative inactive glutathione hydrolase 4 (191 aa).

Thr54 serves as the catalytic Nucleophile. Residues Thr72, Asn74, Glu93, Asp96, Ser126 to Ser127, and Gly147 to Gly148 contribute to the L-glutamate site.

The protein belongs to the gamma-glutamyltransferase family. Expressed at low levels in embryo, roots and leaves. In mature plants, expression is restricted to vascular tissues of roots, leaves, flowers and siliques.

This chain is Putative inactive glutathione hydrolase 4 (GGT4), found in Arabidopsis thaliana (Mouse-ear cress).